Reading from the N-terminus, the 103-residue chain is Large ribosomal subunit protein uL24 (103 aa).

This sequence belongs to the universal ribosomal protein uL24 family. In terms of assembly, part of the 50S ribosomal subunit.

In terms of biological role, one of two assembly initiator proteins, it binds directly to the 5'-end of the 23S rRNA, where it nucleates assembly of the 50S subunit. Its function is as follows. One of the proteins that surrounds the polypeptide exit tunnel on the outside of the subunit. The chain is Large ribosomal subunit protein uL24 from Vesicomyosocius okutanii subsp. Calyptogena okutanii (strain HA).